Reading from the N-terminus, the 214-residue chain is External core antigen (214 aa).

Positions 1–19 (MQLFHLCLIISCTCPTVQA) are cleaved as a signal peptide. The HBEAG stretch occupies residues 25 to 27 (GWL). Positions 165–214 (NAPILSTLPETTVVRRRDRGRSPRRRTPSPRRRRSQSPRRRRSQSRESQC) are disordered. Over residues 178–207 (VRRRDRGRSPRRRTPSPRRRRSQSPRRRRS) the composition is skewed to basic residues. A 1; half-length repeat occupies 186 to 192 (SPRRRTP). Residues 186–208 (SPRRRTPSPRRRRSQSPRRRRSQ) are 3 X 8 AA repeats of S-P-R-R-R-R-S-Q. A propeptide spanning residues 186 to 214 (SPRRRTPSPRRRRSQSPRRRRSQSRESQC) is cleaved from the precursor. A run of 2 repeats spans residues 193–200 (SPRRRRSQ) and 201–208 (SPRRRRSQ).

Belongs to the orthohepadnavirus precore antigen family. Homodimerizes. In terms of processing, phosphorylated. Cleaved by host furin.

The protein localises to the secreted. It localises to the host nucleus. Functionally, may regulate immune response to the intracellular capsid in acting as a T-cell tolerogen, by having an immunoregulatory effect which prevents destruction of infected cells by cytotoxic T-cells. This immune regulation may predispose to chronicity during perinatal infections and prevent severe liver injury during adult infections. The chain is External core antigen from Hepatitis B virus genotype A2 subtype adw2 (isolate Germany/991/1990) (HBV-A).